A 605-amino-acid chain; its full sequence is MNIEQLKERQKCIRNFSIIAHIDHGKSTLADRILEFTGTIDKRIMKEQILDSMDLERERGITIKLNAVEINYQSKDGKNYIMHLIDTPGHVDFSYEVSRSLAACEGALLIIDASQGIQAQTLANVYLAVENNLTLIPVLNKVDLPSADVPKVKEEIKETLGLDPEKALIASGKTGLGVIDILEQIVTRISPPQGDIQKPLQALIFDSYFDSYKGVVPSIRIVNGTVKKGDQIRFMASNSVYEVVEVGVYNPKQIVKDFLAPGDVGYITAAIKSINHVRVGDTITSQTNQALLPLLGYKQMNSVVFCGLYPVETNKYDILKEALEKLKLNDSSLIFEPESSNALGLGFRTGFLGLLHMEIIQERISREFGVEVIATAPSVIYHVYSTKGEKFLVDNPSKLPSTQMIDRIEEPFIKATIMCPEIYIGKVMKLSQNKRGALQNIEYIDSQRVMINYLLPFSEIIYSYFDKLKSLTKGYASFDYEIDKYRVSKLQKMDILLNGEIVDALSLIVHHDFAYERGKAICETLKEFIPKQMFEIPIQAALGKKIIARQTIKAMRKDVTAKLYGGDVTRKKKLLEKQKKGKKKMKTLGKVQLPQKAFLAILATK.

A tr-type G domain is found at 11–193 (KCIRNFSIIA…QIVTRISPPQ (183 aa)). Residues 23-28 (DHGKST) and 140-143 (NKVD) each bind GTP.

It belongs to the TRAFAC class translation factor GTPase superfamily. Classic translation factor GTPase family. LepA subfamily.

The protein localises to the cell membrane. The enzyme catalyses GTP + H2O = GDP + phosphate + H(+). In terms of biological role, required for accurate and efficient protein synthesis under certain stress conditions. May act as a fidelity factor of the translation reaction, by catalyzing a one-codon backward translocation of tRNAs on improperly translocated ribosomes. Back-translocation proceeds from a post-translocation (POST) complex to a pre-translocation (PRE) complex, thus giving elongation factor G a second chance to translocate the tRNAs correctly. Binds to ribosomes in a GTP-dependent manner. The protein is Elongation factor 4 of Aster yellows witches'-broom phytoplasma (strain AYWB).